The following is a 420-amino-acid chain: Gamma-glutamyl phosphate reductase (420 aa).

This sequence belongs to the gamma-glutamyl phosphate reductase family.

It localises to the cytoplasm. The catalysed reaction is L-glutamate 5-semialdehyde + phosphate + NADP(+) = L-glutamyl 5-phosphate + NADPH + H(+). The protein operates within amino-acid biosynthesis; L-proline biosynthesis; L-glutamate 5-semialdehyde from L-glutamate: step 2/2. In terms of biological role, catalyzes the NADPH-dependent reduction of L-glutamate 5-phosphate into L-glutamate 5-semialdehyde and phosphate. The product spontaneously undergoes cyclization to form 1-pyrroline-5-carboxylate. This chain is Gamma-glutamyl phosphate reductase, found in Chlorobium luteolum (strain DSM 273 / BCRC 81028 / 2530) (Pelodictyon luteolum).